Reading from the N-terminus, the 297-residue chain is Pantothenate synthetase (297 aa).

Residue 30-37 (MGYLHAGH) coordinates ATP. The Proton donor role is filled by His-37. Gln-61 contributes to the (R)-pantoate binding site. Gln-61 is a binding site for beta-alanine. An ATP-binding site is contributed by 147–150 (GEKD). Gln-153 contacts (R)-pantoate. Residues Val-176 and 184-187 (LSSR) each bind ATP.

Belongs to the pantothenate synthetase family. In terms of assembly, homodimer.

It localises to the cytoplasm. It carries out the reaction (R)-pantoate + beta-alanine + ATP = (R)-pantothenate + AMP + diphosphate + H(+). It functions in the pathway cofactor biosynthesis; (R)-pantothenate biosynthesis; (R)-pantothenate from (R)-pantoate and beta-alanine: step 1/1. Functionally, catalyzes the condensation of pantoate with beta-alanine in an ATP-dependent reaction via a pantoyl-adenylate intermediate. The polypeptide is Pantothenate synthetase (Rhizobium etli (strain ATCC 51251 / DSM 11541 / JCM 21823 / NBRC 15573 / CFN 42)).